We begin with the raw amino-acid sequence, 257 residues long: Ribosomal RNA small subunit methyltransferase J (257 aa).

S-adenosyl-L-methionine contacts are provided by residues 107-108, 123-124, and D177; these read RD and ER.

This sequence belongs to the methyltransferase superfamily. RsmJ family.

The protein resides in the cytoplasm. It carries out the reaction guanosine(1516) in 16S rRNA + S-adenosyl-L-methionine = N(2)-methylguanosine(1516) in 16S rRNA + S-adenosyl-L-homocysteine + H(+). Functionally, specifically methylates the guanosine in position 1516 of 16S rRNA. The sequence is that of Ribosomal RNA small subunit methyltransferase J from Haemophilus influenzae (strain ATCC 51907 / DSM 11121 / KW20 / Rd).